A 200-amino-acid polypeptide reads, in one-letter code: Glycerol-3-phosphate acyltransferase (200 aa).

The next 5 helical transmembrane spans lie at 2 to 22 (FNIP…AVIV), 51 to 71 (KAAA…VLLA), 84 to 104 (AIAA…FFGF), 114 to 134 (LGVL…IWLV), and 158 to 178 (LFFM…ILVL).

The protein belongs to the PlsY family. In terms of assembly, probably interacts with PlsX.

It localises to the cell inner membrane. The catalysed reaction is an acyl phosphate + sn-glycerol 3-phosphate = a 1-acyl-sn-glycero-3-phosphate + phosphate. Its pathway is lipid metabolism; phospholipid metabolism. Its function is as follows. Catalyzes the transfer of an acyl group from acyl-phosphate (acyl-PO(4)) to glycerol-3-phosphate (G3P) to form lysophosphatidic acid (LPA). This enzyme utilizes acyl-phosphate as fatty acyl donor, but not acyl-CoA or acyl-ACP. This chain is Glycerol-3-phosphate acyltransferase, found in Neisseria gonorrhoeae (strain ATCC 700825 / FA 1090).